Reading from the N-terminus, the 275-residue chain is Probable ABC transporter permease protein PH1216 (275 aa).

Transmembrane regions (helical) follow at residues 10–30 (LLYI…WSAI), 73–93 (IFTT…GFTI), 105–125 (LLAL…IPLV), 137–157 (ILGL…LLFT), 181–203 (IYTK…YQFT), and 241–261 (IQMA…IALG). In terms of domain architecture, ABC transmembrane type-1 spans 68–260 (ILNSLIFTTF…LPTLLIMIAL (193 aa)).

It belongs to the binding-protein-dependent transport system permease family. MalFG subfamily.

The protein localises to the cell membrane. Probably part of a binding-protein-dependent transport system PH1214/15/16. Probably responsible for the translocation of the substrate across the membrane. The polypeptide is Probable ABC transporter permease protein PH1216 (Pyrococcus horikoshii (strain ATCC 700860 / DSM 12428 / JCM 9974 / NBRC 100139 / OT-3)).